Reading from the N-terminus, the 78-residue chain is MKLIIFTGLTLLLIVSLIDVEAQNEGACLPRGSVCTTNHAGCCSKLTCDCYRRFEKGVEKGQKCWCIPTGLKYSKKKE.

The first 22 residues, 1 to 22 (MKLIIFTGLTLLLIVSLIDVEA), serve as a signal peptide directing secretion. Residues 23-26 (QNEG) constitute a propeptide that is removed on maturation.

Belongs to the neurotoxin 19 (CSTX) family. 07 (U7-Lctx) subfamily. In terms of processing, contains 4 disulfide bonds. Expressed by the venom gland.

It is found in the secreted. This chain is U7-lycotoxin-Ls1h, found in Lycosa singoriensis (Wolf spider).